The primary structure comprises 317 residues: Anamorsin homolog 2 (317 aa).

The N-terminal SAM-like domain stretch occupies residues 1 to 162; the sequence is MAKKVGVLLF…KPSWDSASVF (162 aa). A linker region spans residues 163 to 229; the sequence is QLRKGSSQKG…EDDLLTEEDL (67 aa). Positions 240, 247, 250, and 252 each coordinate [2Fe-2S] cluster. The interval 240–252 is fe-S binding site A; that stretch reads CAPTKKACKNCTC. Residues cysteine 278, cysteine 281, cysteine 289, and cysteine 292 each coordinate [4Fe-4S] cluster. 2 consecutive short sequence motifs (cx2C motif) follow at residues 278–281 and 289–292; these read CGSC and CAGC. A fe-S binding site B region spans residues 278-292; it reads CGSCGLGDAFRCAGC.

Belongs to the anamorsin family. In terms of assembly, monomer. [2Fe-2S] cluster is required as a cofactor. Requires [4Fe-4S] cluster as cofactor.

The protein localises to the cytoplasm. The protein resides in the mitochondrion intermembrane space. In terms of biological role, component of the cytosolic iron-sulfur (Fe-S) protein assembly (CIA) machinery. Required for the maturation of extramitochondrial Fe-S proteins. Part of an electron transfer chain functioning in an early step of cytosolic Fe-S biogenesis, facilitating the de novo assembly of a [4Fe-4S] cluster on the cytosolic Fe-S scaffold complex. Electrons are transferred from NADPH via a FAD- and FMN-containing diflavin oxidoreductase. Together with the diflavin oxidoreductase, also required for the assembly of the diferric tyrosyl radical cofactor of ribonucleotide reductase (RNR), probably by providing electrons for reduction during radical cofactor maturation in the catalytic small subunit. In Physcomitrium patens (Spreading-leaved earth moss), this protein is Anamorsin homolog 2.